A 90-amino-acid polypeptide reads, in one-letter code: Small ribosomal subunit protein uS15c (90 aa).

The protein belongs to the universal ribosomal protein uS15 family. Part of the 30S ribosomal subunit.

The protein resides in the plastid. Its subcellular location is the chloroplast. The polypeptide is Small ribosomal subunit protein uS15c (rps15) (Dioscorea elephantipes (Elephant's foot yam)).